We begin with the raw amino-acid sequence, 323 residues long: Ankyrin repeat and SOCS box protein 11 (323 aa).

ANK repeat units lie at residues A64 to L93, N97 to G126, H130 to L159, H162 to Q191, H195 to H224, and W227 to C256. Positions S273–Q323 constitute an SOCS box domain.

It belongs to the ankyrin SOCS box (ASB) family. Substrate-recognition component of the ECS(ASB11) complex, composed of ASB11, CUL5, ELOB, ELOC and RNF7/RBX2.

The protein localises to the endoplasmic reticulum. It participates in protein modification; protein ubiquitination. Its function is as follows. Substrate-recognition component of a cullin-5-RING E3 ubiquitin-protein ligase complex (ECS complex, also named CRL5 complex), which mediates the ubiquitination and subsequent proteasomal degradation of target proteins, such as BIK, DIRAS2 and RPN1. The ECS(ASB11) complex acts as a regulator of the endoplasmic reticulum unfolded protein response by mediating ubiquitination and degradation of BIK. This chain is Ankyrin repeat and SOCS box protein 11 (ASB11), found in Bos taurus (Bovine).